A 96-amino-acid polypeptide reads, in one-letter code: Protein Vpr (96 aa).

The interval 1 to 42 (MEQAPEDQGPQREPHNEWTLELLEELKNEAVRHFPRIWLHGL) is homooligomerization. A phosphoserine; by host mark is found at Ser-79, Ser-94, and Ser-96.

Belongs to the HIV-1 VPR protein family. As to quaternary structure, homooligomer, may form homodimer. Interacts with p6-gag region of the Pr55 Gag precursor protein through a (Leu-X-X)4 motif near the C-terminus of the P6gag protein. Interacts with host UNG. May interact with host RAD23A/HHR23A. Interacts with host VPRBP/DCAF1, leading to hijack the CUL4A-RBX1-DDB1-DCAF1/VPRBP complex, mediating ubiquitination of host proteins such as TERT and ZGPAT and arrest of the cell cycle in G2 phase. Post-translationally, phosphorylated on several residues by host. These phosphorylations regulate VPR activity for the nuclear import of the HIV-1 pre-integration complex.

Its subcellular location is the virion. It localises to the host nucleus. The protein resides in the host extracellular space. Its function is as follows. During virus entry, plays a role in the transport of the viral pre-integration (PIC) complex to the host nucleus. This function is crucial for viral infection of non-dividing macrophages. May act directly at the nuclear pore complex, by binding nucleoporins phenylalanine-glycine (FG)-repeat regions. Functionally, during virus replication, may deplete host UNG protein, and incude G2-M cell cycle arrest. Acts by targeting specific host proteins for degradation by the 26S proteasome, through association with the cellular CUL4A-DDB1 E3 ligase complex by direct interaction with host VPRPB/DCAF-1. Cell cycle arrest reportedly occurs within hours of infection and is not blocked by antiviral agents, suggesting that it is initiated by the VPR carried into the virion. Additionally, VPR induces apoptosis in a cell cycle dependent manner suggesting that these two effects are mechanistically linked. Detected in the serum and cerebrospinal fluid of AIDS patient, VPR may also induce cell death to bystander cells. The sequence is that of Protein Vpr from Homo sapiens (Human).